The primary structure comprises 977 residues: Vacuolar membrane protease (977 aa).

Topologically, residues 1–17 are cytoplasmic; sequence MARSRTAGRCNPFAFYR. The chain crosses the membrane as a helical span at residues 18–38; the sequence is VPVTVFVTLIYVALLAPIIVV. Residues 39–383 lie on the Vacuolar side of the membrane; it reads HHILPAVPES…AFAVFEIHTL (345 aa). 2 N-linked (GlcNAc...) asparagine glycosylation sites follow: Asn-113 and Asn-116. Zn(2+) contacts are provided by His-166 and Asp-178. Glu-212 acts as the Proton acceptor in catalysis. Zn(2+)-binding residues include Glu-213, Glu-238, and His-311. A helical membrane pass occupies residues 384-404; sequence FALSVTLLIVGPLTLFITSII. The Cytoplasmic portion of the chain corresponds to 405-438; sequence LANQDRMYLFGISVPVDDGFGSVPLRGWRGFFRF. The chain crosses the membrane as a helical span at residues 439–459; it reads PFIFGSTTASVVALAYLMAKI. Over 460–469 the chain is Vacuolar; that stretch reads NPMIAHSSEY. The helical transmembrane segment at 470–490 threads the bilayer; the sequence is AVWSMMISAWVFVAWFLSRIA. The Cytoplasmic portion of the chain corresponds to 491-500; the sequence is NFARPSALHR. Residues 501-521 form a helical membrane-spanning segment; sequence IYVLTWMFLLTWVLLVITTVY. The Vacuolar segment spans residues 522-525; that stretch reads ENRD. Residues 526 to 546 form a helical membrane-spanning segment; the sequence is GIASGYFVIFYAFGTFMATWI. The Cytoplasmic segment spans residues 547-659; sequence SYLELFSLPK…WSANLPKWTW (113 aa). Polar residues predominate over residues 566–576; sequence GQISSRPTSLG. The segment at 566-604 is disordered; the sequence is GQISSRPTSLGGSRLLTPSGESVGQHPEDEEPTESTSLL. A helical membrane pass occupies residues 660–680; that stretch reads ILQFLLIAPIVIILIGQLGLL. Residues 681–696 lie on the Vacuolar side of the membrane; that stretch reads ITSAIHQTMQDGSSTL. Residues 697–717 form a helical membrane-spanning segment; it reads VPYLIIALLTTFLFMPTLPFI. Residues 718-726 lie on the Cytoplasmic side of the membrane; sequence HRYTYHIPT. A helical membrane pass occupies residues 727–747; the sequence is FLFLIFVATLVYNLVAFPFSG. Residues 748 to 977 are Vacuolar-facing; it reads NNRTKLFFLQ…LVKGSRSFEV (230 aa). Residues Asn-749 and Asn-791 are each glycosylated (N-linked (GlcNAc...) asparagine).

It belongs to the peptidase M28 family. Requires Zn(2+) as cofactor.

It localises to the vacuole membrane. In terms of biological role, may be involved in vacuolar sorting and osmoregulation. The polypeptide is Vacuolar membrane protease (Talaromyces marneffei (strain ATCC 18224 / CBS 334.59 / QM 7333) (Penicillium marneffei)).